Consider the following 206-residue polypeptide: MKLAVFDFDSTLMDGETIDILAHHYGVGEEVDRITKGAMEGGLDFYESLKRRVALLRGMELSLVEEICANLTLMEGAKELIQELKRRDYKVVVFSGGFKNATSKARETLGLDADFSNILHHKEGKLTGEVGGEMMFGSSKGEMMQTLQRLLGISPELTMAVGDGANDASMFPFAKQRVAFCAKPILREKANIIIEKKDLREILAHL.

The active-site Nucleophile is Asp7. The Mg(2+) site is built by Asp7 and Asp9. The active-site Proton donor is the Asp9. Substrate contacts are provided by residues Glu16, Arg52, 95-96 (SG), and Lys140. Residue Asp163 coordinates Mg(2+). Substrate is bound at residue Asn166.

It belongs to the HAD-like hydrolase superfamily. SerB family. Mg(2+) is required as a cofactor.

It catalyses the reaction O-phospho-L-serine + H2O = L-serine + phosphate. The enzyme catalyses O-phospho-D-serine + H2O = D-serine + phosphate. It participates in amino-acid biosynthesis; L-serine biosynthesis; L-serine from 3-phospho-D-glycerate: step 3/3. This is Phosphoserine phosphatase from Wolinella succinogenes (strain ATCC 29543 / DSM 1740 / CCUG 13145 / JCM 31913 / LMG 7466 / NCTC 11488 / FDC 602W) (Vibrio succinogenes).